We begin with the raw amino-acid sequence, 345 residues long: Phosphoribosylformylglycinamidine cyclo-ligase (345 aa).

Belongs to the AIR synthase family.

It is found in the cytoplasm. The enzyme catalyses 2-formamido-N(1)-(5-O-phospho-beta-D-ribosyl)acetamidine + ATP = 5-amino-1-(5-phospho-beta-D-ribosyl)imidazole + ADP + phosphate + H(+). It functions in the pathway purine metabolism; IMP biosynthesis via de novo pathway; 5-amino-1-(5-phospho-D-ribosyl)imidazole from N(2)-formyl-N(1)-(5-phospho-D-ribosyl)glycinamide: step 2/2. The protein is Phosphoribosylformylglycinamidine cyclo-ligase of Salmonella typhimurium (strain LT2 / SGSC1412 / ATCC 700720).